A 277-amino-acid polypeptide reads, in one-letter code: Energy-coupling factor transporter ATP-binding protein EcfA1 (277 aa).

The ABC transporter domain occupies 5–243 (IRAQNVSFCY…VEVLKKIGLD (239 aa)). 42–49 (GHNGSGKS) contributes to the ATP binding site.

The protein belongs to the ABC transporter superfamily. Energy-coupling factor EcfA family. In terms of assembly, forms a stable energy-coupling factor (ECF) transporter complex composed of 2 membrane-embedded substrate-binding proteins (S component), 2 ATP-binding proteins (A component) and 2 transmembrane proteins (T component).

Its subcellular location is the cell membrane. Functionally, ATP-binding (A) component of a common energy-coupling factor (ECF) ABC-transporter complex. Unlike classic ABC transporters this ECF transporter provides the energy necessary to transport a number of different substrates. This chain is Energy-coupling factor transporter ATP-binding protein EcfA1, found in Caldanaerobacter subterraneus subsp. tengcongensis (strain DSM 15242 / JCM 11007 / NBRC 100824 / MB4) (Thermoanaerobacter tengcongensis).